Reading from the N-terminus, the 357-residue chain is MAGGGQGRVAVIGASGYGGLQTIRLLQDHPSLTVTFLGGERSAGRRWSSICSFLPLPEDPVVQSADAERIAAAADYAVLSLPNGLACQLAPELLQRGVRVVDLSADFRYRSLEQWSQVYAQEANRLSREDSELCQQAVYGLPEWHGPAIAEARLVAAPGCFPTASLLPLLPFLKQGLIDTDGIVIDAKTGTSGGGRVPKEAMLLAEASESIAPYGVIGHRHTSEIEQMAREVAGQDVRLQFTPHLVPMVRGLLSTVYARLRDPGLTAEDCTTVLEAVYRHHPCVSVLPVGTYPATKWARHTNRALVSVQVDTRTGQMILMSAIDNLIKGQAGQGVQCLNLMHGLPPETGLPLQSFYP.

Residue Cys160 is part of the active site.

It belongs to the NAGSA dehydrogenase family. Type 1 subfamily.

The protein localises to the cytoplasm. It carries out the reaction N-acetyl-L-glutamate 5-semialdehyde + phosphate + NADP(+) = N-acetyl-L-glutamyl 5-phosphate + NADPH + H(+). The protein operates within amino-acid biosynthesis; L-arginine biosynthesis; N(2)-acetyl-L-ornithine from L-glutamate: step 3/4. Its function is as follows. Catalyzes the NADPH-dependent reduction of N-acetyl-5-glutamyl phosphate to yield N-acetyl-L-glutamate 5-semialdehyde. This chain is N-acetyl-gamma-glutamyl-phosphate reductase, found in Parasynechococcus marenigrum (strain WH8102).